We begin with the raw amino-acid sequence, 177 residues long: ATP synthase subunit b (177 aa).

The helical transmembrane segment at 15–35 (GISGGTIIYQLLMFIILLALL) threads the bilayer.

Belongs to the ATPase B chain family. F-type ATPases have 2 components, F(1) - the catalytic core - and F(0) - the membrane proton channel. F(1) has five subunits: alpha(3), beta(3), gamma(1), delta(1), epsilon(1). F(0) has three main subunits: a(1), b(2) and c(10-14). The alpha and beta chains form an alternating ring which encloses part of the gamma chain. F(1) is attached to F(0) by a central stalk formed by the gamma and epsilon chains, while a peripheral stalk is formed by the delta and b chains.

The protein resides in the cell membrane. Its function is as follows. F(1)F(0) ATP synthase produces ATP from ADP in the presence of a proton or sodium gradient. F-type ATPases consist of two structural domains, F(1) containing the extramembraneous catalytic core and F(0) containing the membrane proton channel, linked together by a central stalk and a peripheral stalk. During catalysis, ATP synthesis in the catalytic domain of F(1) is coupled via a rotary mechanism of the central stalk subunits to proton translocation. Functionally, component of the F(0) channel, it forms part of the peripheral stalk, linking F(1) to F(0). This Geobacillus kaustophilus (strain HTA426) protein is ATP synthase subunit b.